A 146-amino-acid polypeptide reads, in one-letter code: Snaclec 1 (146 aa).

A signal peptide spans 1-23; that stretch reads MGRFIFMSFGLLVVFLSLSGTGA. Cystine bridges form between C25/C36, C53/C142, and C119/C134. In terms of domain architecture, C-type lectin spans 32 to 143; sequence YEGHCYRVFQ…CSRTYSFVCK (112 aa).

Belongs to the snaclec family. Heterodimer; disulfide-linked. As to expression, expressed by the venom gland.

The protein resides in the secreted. Functionally, interferes with one step of hemostasis (modulation of platelet aggregation, or coagulation cascade, for example). The polypeptide is Snaclec 1 (Sistrurus catenatus edwardsii (Desert massasauga)).